Reading from the N-terminus, the 264-residue chain is MLIHPQFDPVALELGPLAIHWYGLTYLVAFGLFLWLASLRVQHSPFRETGWTRRDVEDLLFYGVLGVIIGGRLGYVLFYKPGYYAAHPLEVFEVWKGGMAFHGGLLGVIGAMALFARTRGRRWLEVTDLIAPCVPTGLASGRIGNFINGELWGRAADPSLPWAMVYPQSGSEIPRHPSPLYQFALEGLLLFVVLWLYARKPRATGQVSGAFLVGYGVLRFIAEYFREPDGFLGLLALGMSMGQWLCVPMVAAGVALWVWAGRRA.

A run of 3 helical transmembrane segments spans residues 17–37, 59–79, and 95–115; these read LAIH…LWLA, LLFY…VLFY, and WKGG…MALF. R142 contacts a 1,2-diacyl-sn-glycero-3-phospho-(1'-sn-glycerol). 2 helical membrane passes run 205-225 and 241-261; these read GQVS…AEYF and MGQW…VWAG.

It belongs to the Lgt family.

The protein localises to the cell inner membrane. The enzyme catalyses L-cysteinyl-[prolipoprotein] + a 1,2-diacyl-sn-glycero-3-phospho-(1'-sn-glycerol) = an S-1,2-diacyl-sn-glyceryl-L-cysteinyl-[prolipoprotein] + sn-glycerol 1-phosphate + H(+). It functions in the pathway protein modification; lipoprotein biosynthesis (diacylglyceryl transfer). Its function is as follows. Catalyzes the transfer of the diacylglyceryl group from phosphatidylglycerol to the sulfhydryl group of the N-terminal cysteine of a prolipoprotein, the first step in the formation of mature lipoproteins. This Methylibium petroleiphilum (strain ATCC BAA-1232 / LMG 22953 / PM1) protein is Phosphatidylglycerol--prolipoprotein diacylglyceryl transferase.